A 255-amino-acid polypeptide reads, in one-letter code: tRNA (guanine-N(7)-)-methyltransferase (255 aa).

The segment at 1–31 (MMHDDPNEAGLPPHNDAIPDETAEGADEVNP) is disordered. Positions 18–27 (IPDETAEGAD) are enriched in acidic residues. Positions 86, 111, 138, and 161 each coordinate S-adenosyl-L-methionine. The active site involves Asp161. Substrate-binding positions include Lys165, Asp197, and 232-235 (TKFE).

It belongs to the class I-like SAM-binding methyltransferase superfamily. TrmB family.

It catalyses the reaction guanosine(46) in tRNA + S-adenosyl-L-methionine = N(7)-methylguanosine(46) in tRNA + S-adenosyl-L-homocysteine. It functions in the pathway tRNA modification; N(7)-methylguanine-tRNA biosynthesis. Functionally, catalyzes the formation of N(7)-methylguanine at position 46 (m7G46) in tRNA. The protein is tRNA (guanine-N(7)-)-methyltransferase of Burkholderia cenocepacia (strain HI2424).